Consider the following 717-residue polypeptide: Pre-mRNA-splicing factor ATP-dependent RNA helicase DEAH10 (717 aa).

The disordered stretch occupies residues Met-1–Ser-29. Residues Phe-12–Ser-29 are compositionally biased toward polar residues. The Helicase ATP-binding domain maps to Val-51–Gln-256. Gly-64–Thr-71 lines the ATP pocket. Positions Asp-162–His-165 match the DEAH box motif. Positions Thr-278–Gly-453 constitute a Helicase C-terminal domain.

This sequence belongs to the DEAD box helicase family. DEAH subfamily. PRP22 sub-subfamily. In terms of tissue distribution, widely expressed but spatially and temporally regulated during development.

Its subcellular location is the nucleus. The protein resides in the nucleolus. The catalysed reaction is ATP + H2O = ADP + phosphate + H(+). In terms of biological role, involved in pre-mRNA splicing. Plays a role during development in processes such as meristem maintenance, leaf morphogenesis and root morphogenesis. This Arabidopsis thaliana (Mouse-ear cress) protein is Pre-mRNA-splicing factor ATP-dependent RNA helicase DEAH10.